We begin with the raw amino-acid sequence, 277 residues long: Probable endonuclease 4 (277 aa).

Zn(2+) is bound by residues His-67, His-107, Glu-142, Asp-176, His-179, His-211, Asp-224, His-226, and Glu-256.

The protein belongs to the AP endonuclease 2 family. Requires Zn(2+) as cofactor.

It catalyses the reaction Endonucleolytic cleavage to 5'-phosphooligonucleotide end-products.. In terms of biological role, endonuclease IV plays a role in DNA repair. It cleaves phosphodiester bonds at apurinic or apyrimidinic (AP) sites, generating a 3'-hydroxyl group and a 5'-terminal sugar phosphate. The sequence is that of Probable endonuclease 4 from Clostridium botulinum (strain Alaska E43 / Type E3).